The following is a 125-amino-acid chain: Large-conductance mechanosensitive channel (125 aa).

A run of 2 helical transmembrane segments spans residues 14–34 (VIDL…VQSL) and 67–87 (GSFL…FLIV).

This sequence belongs to the MscL family. As to quaternary structure, homopentamer.

It localises to the cell membrane. Functionally, channel that opens in response to stretch forces in the membrane lipid bilayer. May participate in the regulation of osmotic pressure changes within the cell. In Lactobacillus helveticus (strain DPC 4571), this protein is Large-conductance mechanosensitive channel.